Consider the following 272-residue polypeptide: Shikimate dehydrogenase (NADP(+)) (272 aa).

Shikimate contacts are provided by residues 14-16 (SKS) and threonine 61. The active-site Proton acceptor is the lysine 65. Residue glutamate 77 coordinates NADP(+). 2 residues coordinate shikimate: asparagine 86 and aspartate 102. Residues 126-130 (GAGGA), 149-154 (NRTVSR), and methionine 213 each bind NADP(+). Residue tyrosine 215 coordinates shikimate. Residue glycine 237 coordinates NADP(+).

Belongs to the shikimate dehydrogenase family. As to quaternary structure, homodimer.

The catalysed reaction is shikimate + NADP(+) = 3-dehydroshikimate + NADPH + H(+). Its pathway is metabolic intermediate biosynthesis; chorismate biosynthesis; chorismate from D-erythrose 4-phosphate and phosphoenolpyruvate: step 4/7. In terms of biological role, involved in the biosynthesis of the chorismate, which leads to the biosynthesis of aromatic amino acids. Catalyzes the reversible NADPH linked reduction of 3-dehydroshikimate (DHSA) to yield shikimate (SA). The chain is Shikimate dehydrogenase (NADP(+)) from Escherichia coli O157:H7.